Reading from the N-terminus, the 808-residue chain is Disks large-associated protein 5 (808 aa).

Residues Ser-66 and Ser-70 each carry the phosphoserine modification. A coiled-coil region spans residues 88–119 (QRKQLLQKYKEEKQLQKLKEQREKAKRGVFKV). The disordered stretch occupies residues 134–282 (QRGAKAEPEK…QTRETSEMGP (149 aa)). Basic and acidic residues-rich tracts occupy residues 135 to 145 (RGAKAEPEKAF) and 180 to 193 (QTSE…ERKV). A Phosphoserine modification is found at Ser-201. Basic and acidic residues-rich tracts occupy residues 232–241 (TNEKGSERMR) and 249–278 (KKPE…RETS). Ser-328 carries the phosphoserine modification. Thr-337 and Thr-386 each carry phosphothreonine. Residues 377–413 (HVLNQKGASTSDSNHASVKGVPCSEGSEGQTSQPPHD) are disordered. Positions 382 to 392 (KGASTSDSNHA) are enriched in polar residues. Residue Ser-598 is modified to Phosphoserine. The residue at position 607 (Ser-607) is a Phosphoserine; by AURKA. The residue at position 612 (Ser-612) is a Phosphoserine. Thr-617 carries the phosphothreonine modification. Position 620 is a phosphoserine (Ser-620). The segment at 629 to 654 (RAAGDLLRQKMPLKKPDPQSSKSEHV) is disordered. The segment covering 642-654 (KKPDPQSSKSEHV) has biased composition (basic and acidic residues). Thr-728 carries the phosphothreonine modification. Residues 735-757 (SNPETNTSSQSNTSQEEAEASQS) form a disordered region. Position 743 is a phosphoserine (Ser-743). At Ser-797 the chain carries Phosphoserine; by AURKA. Ser-806 bears the Phosphoserine mark.

This sequence belongs to the SAPAP family. As to quaternary structure, interacts with CDC2. Interacts with the C-terminal proline-rich region of FBXO7. Recruited by FBXO7 to a SCF (SKP1-CUL1-F-box) protein complex in a CDC2/Cyclin B-phosphorylation dependent manner. Interacts with CDH1. In terms of processing, ubiquitinated, leading to its degradation. Post-translationally, decreased phosphorylation levels are associated with the differentiation of intestinal epithelial cells. Expressed at low levels in normal resting liver. Up-regulated in regenerating liver after partial hepatectomy.

The protein localises to the nucleus. The protein resides in the cytoplasm. It is found in the cytoskeleton. It localises to the spindle. Functionally, potential cell cycle regulator that may play a role in carcinogenesis of cancer cells. Mitotic phosphoprotein regulated by the ubiquitin-proteasome pathway. Key regulator of adherens junction integrity and differentiation that may be involved in CDH1-mediated adhesion and signaling in epithelial cells. In Mus musculus (Mouse), this protein is Disks large-associated protein 5 (Dlgap5).